Consider the following 506-residue polypeptide: Maturase K (506 aa).

This sequence belongs to the intron maturase 2 family. MatK subfamily.

The protein localises to the plastid. It is found in the chloroplast. Functionally, usually encoded in the trnK tRNA gene intron. Probably assists in splicing its own and other chloroplast group II introns. This chain is Maturase K, found in Olea europaea (Common olive).